A 253-amino-acid polypeptide reads, in one-letter code: Aminoglycoside nucleotidyltransferase (4') (253 aa).

Residues 1 to 127 (MNGPIIMTRE…KVYQTAKSVE (127 aa)) form an N-terminal domain region. ATP-binding residues include Ser39, Arg42, Ser49, Asp50, and Glu52. Positions 50 and 52 each coordinate Mg(2+). Neomycin B contacts are provided by Glu52 and Glu67. Kanamycin A is bound by residues Glu67, Lys74, Glu76, Glu141, and Glu145. The tract at residues 128–241 (AQTFHDAICA…NGIQEWTERH (114 aa)) is C-terminal domain. 3 residues coordinate ATP: Glu145, Lys149, and Thr187. Residue Glu145 coordinates Mg(2+). Glu145 serves as the catalytic Proton acceptor.

Homodimer. Mg(2+) serves as cofactor.

The catalysed reaction is amikacin + ATP = 4'-adenylylamikacin + diphosphate. The enzyme catalyses kanamycin A + ATP = 4'-adenylylkanamycin A + diphosphate. It carries out the reaction neomycin B + ATP = 4'-adenylylneomycin B + diphosphate. It catalyses the reaction paromomycin + ATP = 4'-adenylylparomomycin + diphosphate. The catalysed reaction is ribostamycin + ATP = 4'-adenylylribostamycin + diphosphate. The enzyme catalyses tobramycin + ATP = 4'-adenylyltobramycin + diphosphate. It carries out the reaction kanamycin A + CTP = 4'-cytidylylkanamycin A + diphosphate. It catalyses the reaction kanamycin A + GTP = 4'-guanylylkanamycin A + diphosphate. The catalysed reaction is kanamycin A + ITP = 4'-inosinylylkanamycin A + diphosphate. The enzyme catalyses dTTP + kanamycin A = 4'-thymidylylkanamycin A + diphosphate. It carries out the reaction kanamycin A + UTP = 4'-uridylylkanamycin A + diphosphate. It catalyses the reaction kanamycin A + dATP = 4'-(2'-deoxyadenylyl)kanamycin A + diphosphate. The catalysed reaction is kanamycin A + dCTP = 4'-(2'-deoxycytidylyl)kanamycin A + diphosphate. The enzyme catalyses kanamycin A + dGTP = 4'-(2'-deoxyguanylyl)kanamycin A + diphosphate. It carries out the reaction dUTP + kanamycin A = 4'-(2'-deoxyuridylyl)kanamycin A + diphosphate. It catalyses the reaction amikacin + GTP = 4'-guanylylamikacin + diphosphate. The catalysed reaction is amikacin + ITP = 4'-inosinylylamikacin + diphosphate. The enzyme catalyses amikacin + CTP = 4'-cytidylylamikacin + diphosphate. It carries out the reaction amikacin + UTP = 4'-uridylylamikacin + diphosphate. It catalyses the reaction amikacin + dTTP = 4'-thymidylylamikacin + diphosphate. Its function is as follows. Inactivates aminoglycoside antibiotics such as kanamycin by catalyzing the transfer of a nucleotidyl group from a wide variety of nucleoside triphosphates ((d)ATP, (d)CTP, (d)GTP, ITP, TTP and (d)UTP) to the 4'-hydroxyl group of the aminoglycoside. In vitro, antibiotics without the 4'-hydroxyl but possessing a 4''-hydroxyl group (e.g. sisomicin and gentamicin) are also modifed but with poor specificity. The 3' position of the NTP ribose ring does not tolerate large substitutions (e.g. ddATP) and dNTPs and TTP are better substrates than their NTP counterparts. A short (2.35 Angstrom) hydrogen bond initially facilitates tight binding of the substrate (between Glu-52 and antibiotic) that is subsequently disrupted by the assembly of the active ternary complex. This enables the release of products post-catalysis, a 'catch and release' mechanism. This chain is Aminoglycoside nucleotidyltransferase (4') (knt), found in Staphylococcus aureus.